The primary structure comprises 513 residues: GMP synthase [glutamine-hydrolyzing] (513 aa).

Positions 3-192 constitute a Glutamine amidotransferase type-1 domain; it reads TVVVLDYGSQ…VSKIAKMEKN (190 aa). Cysteine 80 acts as the Nucleophile in catalysis. Residues histidine 166 and glutamate 168 contribute to the active site. A GMPS ATP-PPase domain is found at 193–388; sequence WEMKDFVSEK…LELPQSMINR (196 aa). Position 220–226 (220–226) interacts with ATP; that stretch reads SGGVDSS.

As to quaternary structure, homodimer.

It catalyses the reaction XMP + L-glutamine + ATP + H2O = GMP + L-glutamate + AMP + diphosphate + 2 H(+). It participates in purine metabolism; GMP biosynthesis; GMP from XMP (L-Gln route): step 1/1. In terms of biological role, catalyzes the synthesis of GMP from XMP. The protein is GMP synthase [glutamine-hydrolyzing] of Thermosipho melanesiensis (strain DSM 12029 / CIP 104789 / BI429).